Consider the following 238-residue polypeptide: Expansin-like protein 5 (238 aa).

An N-terminal signal peptide occupies residues 1-21; the sequence is MRINFKLILIILTSFYGIINC. The 101-residue stretch at 45–145 folds into the Expansin-like EG45 domain; it reads NGNCGFGKLT…VKVPCRVSGN (101 aa). 2 cysteine pairs are disulfide-bonded: cysteine 48-cysteine 78 and cysteine 81-cysteine 140. An N-linked (GlcNAc...) asparagine glycan is attached at asparagine 89.

The protein belongs to the expansin family. Expansin A subfamily.

It localises to the secreted. May serve to lubricate the movement of the cellulose microfibrils during cell growth and wall extension and/or may serve to maintain the fluid state of the slug cell wall. The sequence is that of Expansin-like protein 5 (expl5) from Dictyostelium discoideum (Social amoeba).